A 285-amino-acid polypeptide reads, in one-letter code: Acetyl-coenzyme A carboxylase carboxyl transferase subunit beta (285 aa).

The region spanning 29–285 (IMTKCPKCKK…ILKIHQEVSN (257 aa)) is the CoA carboxyltransferase N-terminal domain. Residues Cys33, Cys36, Cys52, and Cys55 each coordinate Zn(2+). A C4-type zinc finger spans residues 33 to 55 (CPKCKKIMYTKELNENLNVCFNC).

Belongs to the AccD/PCCB family. As to quaternary structure, acetyl-CoA carboxylase is a heterohexamer composed of biotin carboxyl carrier protein (AccB), biotin carboxylase (AccC) and two subunits each of ACCase subunit alpha (AccA) and ACCase subunit beta (AccD). It depends on Zn(2+) as a cofactor.

It is found in the cytoplasm. The catalysed reaction is N(6)-carboxybiotinyl-L-lysyl-[protein] + acetyl-CoA = N(6)-biotinyl-L-lysyl-[protein] + malonyl-CoA. It functions in the pathway lipid metabolism; malonyl-CoA biosynthesis; malonyl-CoA from acetyl-CoA: step 1/1. Component of the acetyl coenzyme A carboxylase (ACC) complex. Biotin carboxylase (BC) catalyzes the carboxylation of biotin on its carrier protein (BCCP) and then the CO(2) group is transferred by the transcarboxylase to acetyl-CoA to form malonyl-CoA. The protein is Acetyl-coenzyme A carboxylase carboxyl transferase subunit beta of Staphylococcus epidermidis (strain ATCC 12228 / FDA PCI 1200).